The following is a 296-amino-acid chain: mRNA export factor rsm1 (296 aa).

The C3HC-type zinc-finger motif lies at 40 to 174 (PWSREEFLRR…VSTHLPEEMT (135 aa)).

It is found in the cytoplasm. Its subcellular location is the nucleus. In terms of biological role, involved in the export of mRNA from the nucleus to the cytoplasm. This is mRNA export factor rsm1 (rsm1) from Schizosaccharomyces pombe (strain 972 / ATCC 24843) (Fission yeast).